We begin with the raw amino-acid sequence, 305 residues long: Transmembrane protein 74 (305 aa).

S11 is modified (phosphoserine). A compositionally biased stretch (polar residues) spans 122-132; it reads QRSQRSPSAKG. Residues 122-143 are disordered; it reads QRSQRSPSAKGSNHPVDLGWGN. A run of 2 helical transmembrane segments spans residues 178 to 198 and 232 to 252; these read FISA…SYIV and VIAG…LLMM.

This sequence belongs to the TMEM74 family.

The protein resides in the lysosome membrane. It localises to the cytoplasmic vesicle. Its subcellular location is the autophagosome membrane. Its function is as follows. Plays an essential role in autophagy. TMEM74-induced autophagy may involve PI3K signal transduction. This is Transmembrane protein 74 (Tmem74) from Mus musculus (Mouse).